Here is a 776-residue protein sequence, read N- to C-terminus: Disintegrin and metalloproteinase domain-containing protein 28 (776 aa).

Positions 1 to 19 are cleaved as a signal peptide; it reads MLQALLTVSLLLSPVPVSA. A propeptide spanning residues 20 to 193 is cleaved from the precursor; the sequence is IKELPGVKKY…IARPATRLVK (174 aa). The short motif at 168 to 175 is the Cysteine switch element; sequence STCGTDGV. Cysteine 170 provides a ligand contact to Zn(2+). Residues 194–666 are Extracellular-facing; that stretch reads LNDGKVQKHE…CDDSSVVFYF (473 aa). One can recognise a Peptidase M12B domain in the interval 204–400; sequence KYIEYYLVLD…KLSNCLFNAP (197 aa). Residues asparagine 268 and asparagine 275 are each glycosylated (N-linked (GlcNAc...) asparagine). Cystine bridges form between cysteine 315–cysteine 395, cysteine 355–cysteine 379, cysteine 357–cysteine 362, and cysteine 466–cysteine 486. Zn(2+) is bound at residue histidine 340. Glutamate 341 is a catalytic residue. Residues histidine 344 and histidine 350 each contribute to the Zn(2+) site. Asparagine 352 carries an N-linked (GlcNAc...) asparagine glycan. The 87-residue stretch at 408 to 494 folds into the Disintegrin domain; sequence TPICGNQMVE…NCPDDRFRAN (87 aa). N-linked (GlcNAc...) asparagine glycans are attached at residues asparagine 558, asparagine 603, and asparagine 629. Residues 626-658 form the EGF-like domain; sequence KSTNCSSKCKGHAVCDHELQCQCEEGWSPPDCD. Cystine bridges form between cysteine 630–cysteine 640, cysteine 634–cysteine 646, and cysteine 648–cysteine 657. The helical transmembrane segment at 667–687 threads the bilayer; it reads SIVVAVLFPVAVISLVVAIVI. Over 688-776 the chain is Cytoplasmic; that stretch reads RQQSSREKQK…SSFLDSNPKA (89 aa). Residues 691 to 701 are compositionally biased toward basic and acidic residues; the sequence is SSREKQKKDQR. Disordered regions lie at residues 691–728 and 746–776; these read SSREKQKKDQRPLSTTGTRPHKQKRKPQMVKAVQPQEM and PASFLISKPDFSPPPIPAPRSSSFLDSNPKA. The segment covering 709–718 has biased composition (basic residues); it reads RPHKQKRKPQ.

Zn(2+) is required as a cofactor. In terms of processing, pro-domain removal and maturation may be, at least in part, autocatalytic. In terms of tissue distribution, expressed at high levels in epididymis and at lower levels in lung.

It is found in the membrane. Functionally, may play a role in the adhesive and proteolytic events that occur during lymphocyte emigration or may function in ectodomain shedding of lymphocyte surface target proteins, such as FASL and CD40L. May be involved in sperm maturation. The sequence is that of Disintegrin and metalloproteinase domain-containing protein 28 (ADAM28) from Macaca fascicularis (Crab-eating macaque).